Reading from the N-terminus, the 286-residue chain is UPF0761 membrane protein KPN78578_41360 (286 aa).

7 helical membrane passes run Leu-44–Phe-64, Phe-74–Phe-94, Val-104–Leu-124, Phe-140–Ile-160, Leu-183–Thr-203, Ala-210–Leu-230, and Val-244–Leu-264.

The protein belongs to the UPF0761 family.

It is found in the cell inner membrane. This is UPF0761 membrane protein KPN78578_41360 from Klebsiella pneumoniae subsp. pneumoniae (strain ATCC 700721 / MGH 78578).